Reading from the N-terminus, the 432-residue chain is Thiol-specific monooxygenase (432 aa).

Residues G13–G17 and V46–W47 each bind FAD. An NADP(+)-binding site is contributed by T65–N66. An FAD-binding site is contributed by E117 to V118. NADP(+) is bound at residue S199–D202.

Belongs to the FMO family. Monomer. Requires FAD as cofactor.

Flavin-dependent oxidation of thiol-containing compounds. Probably required for the correct folding of disulfide-bonded proteins. This is Thiol-specific monooxygenase (FMO1) from Saccharomyces cerevisiae (strain ATCC 204508 / S288c) (Baker's yeast).